Reading from the N-terminus, the 327-residue chain is tRNA uridine(34) hydroxylase (327 aa).

A Rhodanese domain is found at 122-218; that stretch reads QENRCLVLDV…YGLKMGTGKW (97 aa). The Cysteine persulfide intermediate role is filled by cysteine 178.

Belongs to the TrhO family.

It catalyses the reaction uridine(34) in tRNA + AH2 + O2 = 5-hydroxyuridine(34) in tRNA + A + H2O. Catalyzes oxygen-dependent 5-hydroxyuridine (ho5U) modification at position 34 in tRNAs. The sequence is that of tRNA uridine(34) hydroxylase from Chlamydia trachomatis serovar L2 (strain ATCC VR-902B / DSM 19102 / 434/Bu).